The following is a 326-amino-acid chain: Mitochondrial substrate carrier family protein R (326 aa).

Solcar repeat units lie at residues 9-95 (TSPM…LKNN), 101-214 (KSSV…FKRI), and 226-318 (VIGI…LCDY). Helical transmembrane passes span 12–32 (MVTLLAGGVSGVIAKSTIAPL), 64–84 (LAGLWKGNTATILRIFPYSAI), 104–124 (VQIFIAGSLGFSCAILLTYPL), 185–205 (GIWRGILPTLYGSIPYAGVGY), 226–246 (VIGIYKLISGGVAGGLGQTAA), and 290–310 (LFKGISINYIKVIPTNGVAFL).

This sequence belongs to the mitochondrial carrier (TC 2.A.29) family.

Its subcellular location is the mitochondrion inner membrane. In terms of biological role, mitochondrial solute carriers shuttle metabolites, nucleotides, and cofactors through the mitochondrial inner membrane. May be involved in the accumulation of coenzyme A in the mitochondrial matrix. This chain is Mitochondrial substrate carrier family protein R (mcfR), found in Dictyostelium discoideum (Social amoeba).